The sequence spans 76 residues: UPF0291 protein GK1331 (76 aa).

The segment at 57 to 76 is disordered; that stretch reads PSGNDVTPKKLKESQRRRFH. Positions 63–76 are enriched in basic and acidic residues; that stretch reads TPKKLKESQRRRFH.

Belongs to the UPF0291 family.

It is found in the cytoplasm. This chain is UPF0291 protein GK1331, found in Geobacillus kaustophilus (strain HTA426).